The chain runs to 1004 residues: Retrovirus-related Pol polyprotein from type-1 retrotransposable element R1 (1004 aa).

The 268-residue stretch at 450-717 (QCLLESYFPQ…SEVKHLGIFV (268 aa)) folds into the Reverse transcriptase domain. Residues 853 to 1004 (LSGSQFKELL…RLMRGMRIRE (152 aa)) form a nucleic acid-binding endonuclease region.

The catalysed reaction is DNA(n) + a 2'-deoxyribonucleoside 5'-triphosphate = DNA(n+1) + diphosphate. This is Retrovirus-related Pol polyprotein from type-1 retrotransposable element R1 from Bradysia coprophila (Dark-winged fungus gnat).